A 154-amino-acid polypeptide reads, in one-letter code: 8-oxo-dGTP diphosphatase (154 aa).

In terms of domain architecture, Nudix hydrolase spans 1–129 (MPQLATICYI…DHTFVEWLLE (129 aa)). Mg(2+) contacts are provided by Gly38, Glu53, Glu56, and Glu57. Positions 38–59 (GKLERGETPQECAAREILEETG) match the Nudix box motif.

This sequence belongs to the Nudix hydrolase family. As to quaternary structure, homotrimer. Requires Mg(2+) as cofactor.

It catalyses the reaction 8-oxo-dGTP + H2O = 8-oxo-dGMP + diphosphate + H(+). Involved in the DNA repair system to avoid A.T to G.C transversions. Degrades 8-oxo-dGTP to the monophosphate, but is also active on all of the nucleoside triphosphates. This Streptococcus pneumoniae serotype 4 (strain ATCC BAA-334 / TIGR4) protein is 8-oxo-dGTP diphosphatase (mutX).